A 218-amino-acid polypeptide reads, in one-letter code: METRESTESSPGKHLVTSEELISEGKWVKFEKTTYMDPTGKTRTWETVKLTTRKGKSADAVSVIPVLQRTLHHECVILVKQFRPPMGSYCLEFPAGFIEDGESPEAAALRELEEETGYKGEVAECSPAVCMDPGLSNCTTHVVTVTINGDDAGNVRPKPKPGDGEFMEVISLPKNDLLTRLDALGAEQHLTVDAKVYAYGLALKHANSKPFEVPFLKF.

Position 1 is an N-acetylmethionine (Met-1). At Ser-10 the chain carries Phosphoserine. Position 27 (Trp-27) interacts with substrate. Lys-41 is covalently cross-linked (Glycyl lysine isopeptide (Lys-Gly) (interchain with G-Cter in SUMO2)). Thr-44 is subject to Phosphothreonine. Residues 45-46 (WE) and Arg-83 contribute to the substrate site. A Nudix hydrolase domain is found at 56–196 (KSADAVSVIP…EQHLTVDAKV (141 aa)). Ala-95 contacts Mg(2+). Residues 96 to 117 (GFIEDGESPEAAALRELEEETG) carry the Nudix box motif. Phe-97 is a substrate binding site. Positions 111 and 115 each coordinate Mg(2+). Substrate is bound at residue Asp-132. Glu-165 contacts Mg(2+). 2 positions are modified to N6-acetyllysine: Lys-209 and Lys-217.

This sequence belongs to the Nudix hydrolase family. Homodimer. Interacts with PARG. Mg(2+) is required as a cofactor. Phosphorylation at Thr-44 is required for homodimer stability; dephosphorylation results in destabilization of the homodimer. Dephosphorylation at Thr-44 promotes the ATP-synthesis activity. As to expression, widely expressed. Most abundant in liver.

The protein resides in the nucleus. The catalysed reaction is D-ribose 5-phosphate + ATP + H(+) = ADP-D-ribose + diphosphate. The enzyme catalyses ADP-D-ribose + H2O = D-ribose 5-phosphate + AMP + 2 H(+). It catalyses the reaction 8-oxo-dGDP + H2O = 8-oxo-dGMP + phosphate + H(+). Its function is as follows. Enzyme that can either act as an ADP-sugar pyrophosphatase in absence of diphosphate or catalyze the synthesis of ATP in presence of diphosphate. In absence of diphosphate, hydrolyzes with similar activities various modified nucleoside diphosphates such as ADP-ribose, ADP-mannose, ADP-glucose, 8-oxo-GDP and 8-oxo-dGDP. Can also hydrolyze other nucleotide sugars with low activity. In presence of diphosphate, mediates the synthesis of ATP in the nucleus by catalyzing the conversion of ADP-ribose to ATP and ribose 5-phosphate. Nuclear ATP synthesis takes place when dephosphorylated at Thr-44. Nuclear ATP generation is required for extensive chromatin remodeling events that are energy-consuming. Does not play a role in U8 snoRNA decapping activity. Binds U8 snoRNA. This is ADP-sugar pyrophosphatase from Mus musculus (Mouse).